Here is a 122-residue protein sequence, read N- to C-terminus: Large ribosomal subunit protein uL18 (122 aa).

Belongs to the universal ribosomal protein uL18 family. Part of the 50S ribosomal subunit; part of the 5S rRNA/L5/L18/L25 subcomplex. Contacts the 5S and 23S rRNAs.

This is one of the proteins that bind and probably mediate the attachment of the 5S RNA into the large ribosomal subunit, where it forms part of the central protuberance. This chain is Large ribosomal subunit protein uL18, found in Acetivibrio thermocellus (strain ATCC 27405 / DSM 1237 / JCM 9322 / NBRC 103400 / NCIMB 10682 / NRRL B-4536 / VPI 7372) (Clostridium thermocellum).